The chain runs to 313 residues: tRNA uridine(34) hydroxylase (313 aa).

The region spanning 124 to 218 is the Rhodanese domain; the sequence is SDPEVLLIDT…YLEEVPQQES (95 aa). The active-site Cysteine persulfide intermediate is the Cys-178.

This sequence belongs to the TrhO family.

The catalysed reaction is uridine(34) in tRNA + AH2 + O2 = 5-hydroxyuridine(34) in tRNA + A + H2O. Functionally, catalyzes oxygen-dependent 5-hydroxyuridine (ho5U) modification at position 34 in tRNAs. This Pseudomonas fluorescens (strain ATCC BAA-477 / NRRL B-23932 / Pf-5) protein is tRNA uridine(34) hydroxylase.